The primary structure comprises 393 residues: NAD(P)H-quinone oxidoreductase subunit H, chloroplastic (393 aa).

The protein belongs to the complex I 49 kDa subunit family. NDH is composed of at least 16 different subunits, 5 of which are encoded in the nucleus.

The protein resides in the plastid. The protein localises to the chloroplast thylakoid membrane. The catalysed reaction is a plastoquinone + NADH + (n+1) H(+)(in) = a plastoquinol + NAD(+) + n H(+)(out). It carries out the reaction a plastoquinone + NADPH + (n+1) H(+)(in) = a plastoquinol + NADP(+) + n H(+)(out). NDH shuttles electrons from NAD(P)H:plastoquinone, via FMN and iron-sulfur (Fe-S) centers, to quinones in the photosynthetic chain and possibly in a chloroplast respiratory chain. The immediate electron acceptor for the enzyme in this species is believed to be plastoquinone. Couples the redox reaction to proton translocation, and thus conserves the redox energy in a proton gradient. The protein is NAD(P)H-quinone oxidoreductase subunit H, chloroplastic of Cryptomeria japonica (Japanese cedar).